Reading from the N-terminus, the 236-residue chain is Leucyl/phenylalanyl-tRNA--protein transferase (236 aa).

Belongs to the L/F-transferase family.

It is found in the cytoplasm. It catalyses the reaction N-terminal L-lysyl-[protein] + L-leucyl-tRNA(Leu) = N-terminal L-leucyl-L-lysyl-[protein] + tRNA(Leu) + H(+). The enzyme catalyses N-terminal L-arginyl-[protein] + L-leucyl-tRNA(Leu) = N-terminal L-leucyl-L-arginyl-[protein] + tRNA(Leu) + H(+). It carries out the reaction L-phenylalanyl-tRNA(Phe) + an N-terminal L-alpha-aminoacyl-[protein] = an N-terminal L-phenylalanyl-L-alpha-aminoacyl-[protein] + tRNA(Phe). Functions in the N-end rule pathway of protein degradation where it conjugates Leu, Phe and, less efficiently, Met from aminoacyl-tRNAs to the N-termini of proteins containing an N-terminal arginine or lysine. The polypeptide is Leucyl/phenylalanyl-tRNA--protein transferase (Vibrio campbellii (strain ATCC BAA-1116)).